Consider the following 282-residue polypeptide: Purine nucleoside phosphorylase (282 aa).

Residues S46, H78, and 103 to 105 (RTH) contribute to the phosphate site. Residue E204 is part of the active site. E204 contributes to the a purine D-ribonucleoside binding site. S223 is a phosphate binding site. N246 lines the a purine D-ribonucleoside pocket.

It belongs to the PNP/MTAP phosphorylase family. In terms of assembly, homotrimer.

The catalysed reaction is a purine 2'-deoxy-D-ribonucleoside + phosphate = a purine nucleobase + 2-deoxy-alpha-D-ribose 1-phosphate. The protein operates within purine metabolism; purine nucleoside salvage. In terms of biological role, the purine nucleoside phosphorylases catalyze the phosphorolytic breakdown of the N-glycosidic bond in the beta-(deoxy)ribonucleoside molecules, with the formation of the corresponding free purine bases and pentose-1-phosphate. Cleaves guanosine, inosine, 2'-deoxyguanosine and 2'-deoxyinosine. In Cellulomonas sp, this protein is Purine nucleoside phosphorylase (punA).